A 235-amino-acid polypeptide reads, in one-letter code: 7-cyano-7-deazaguanine synthase (235 aa).

Residue 16–26 coordinates ATP; sequence FSGGQDSTTCL. Residues C195, C204, C207, and C210 each coordinate Zn(2+).

It belongs to the QueC family. Zn(2+) is required as a cofactor.

The catalysed reaction is 7-carboxy-7-deazaguanine + NH4(+) + ATP = 7-cyano-7-deazaguanine + ADP + phosphate + H2O + H(+). The protein operates within purine metabolism; 7-cyano-7-deazaguanine biosynthesis. Catalyzes the ATP-dependent conversion of 7-carboxy-7-deazaguanine (CDG) to 7-cyano-7-deazaguanine (preQ(0)). This chain is 7-cyano-7-deazaguanine synthase, found in Shewanella frigidimarina (strain NCIMB 400).